Here is a 1088-residue protein sequence, read N- to C-terminus: RNA-directed RNA polymerase (1088 aa).

The RdRp catalytic domain occupies 501 to 687; sequence LSYGDVTRFL…AKRYIAGGKI (187 aa).

It belongs to the reoviridae RNA-directed RNA polymerase family. Interacts with VP3 (Potential). Interacts with VP2; this interaction activates VP1. Interacts with NSP5; this interaction is probably necessary for the formation of functional virus factories. Interacts with NSP2; this interaction is weak. Requires Mg(2+) as cofactor.

The protein localises to the virion. The catalysed reaction is RNA(n) + a ribonucleoside 5'-triphosphate = RNA(n+1) + diphosphate. RNA-directed RNA polymerase that is involved in both transcription and genome replication. Together with VP3 capping enzyme, forms an enzyme complex positioned near the channels situated at each of the five-fold vertices of the core. Following infection, the outermost layer of the virus is lost, leaving a double-layered particle (DLP) made up of the core and VP6 shell. VP1 then catalyzes the transcription of fully conservative plus-strand genomic RNAs that are extruded through the DLP's channels into the cytoplasm where they function as mRNAs for translation of viral proteins. One copy of each of the viral (+)RNAs is also recruited during core assembly, together with newly synthesized polymerase complexes and VP2. The polymerase of these novo-formed particles catalyzes the synthesis of complementary minus-strands leading to dsRNA formation. To do so, the polymerase specifically recognizes and binds 4 bases 5'-UGUG-3' in the conserved 3'-sequence of plus-strand RNA templates. VP2 presumably activates the autoinhibited VP1-RNA complex to coordinate packaging and genome replication. Once dsRNA synthesis is complete, the polymerase switches to the transcriptional mode, thus providing secondary transcription. This Rotavirus A (strain RVA/Pig/United States/Gottfried/1983/G4P2B[6]) (RV-A) protein is RNA-directed RNA polymerase.